Reading from the N-terminus, the 438-residue chain is MAQFFKPKKKASVNTKHLSVDVVRLDHNGAGIAFVDKKPVFIEGALPGEKAIIQFIEQKKQFSRAKLIKLAQKSEKRQTPICQHYHECGGCNLQHLQHEEQIVAKNEKLQELMKKQGVSQGEMVQPIMGEELSYRRRARISLMINKQTNQLDFGFRKKQSKAIVNVRHCPVLVQELDQHLESLFTLLNQLKGKKNLGHVELVQADNGSVLLIRHVADFNEKDHQALVNYCEERNLILYLMPEADVLNHVRGEEPFYLIDGTKIYFTPKDFIQVNRKVNEQMVEQALSWLDLNENDSVLDLFCGLGNFSLPLAKKVKTVVGIEGVDDMVQRAKLNAERNHLSNVSFYQANLEEEASDQVWASTKFTKILLDPARAGAAGVMETVAKLKPQTVVYVSCNPATLARDSQLLIQHGFKLTRLGMLDMFPHTGHLESMALFER.

In terms of domain architecture, TRAM spans 10–69; sequence KASVNTKHLSVDVVRLDHNGAGIAFVDKKPVFIEGALPGEKAIIQFIEQKKQFSRAKLIK. [4Fe-4S] cluster contacts are provided by Cys82, Cys88, Cys91, and Cys169. S-adenosyl-L-methionine is bound by residues Gln272, Phe301, Asn306, Glu322, Asn349, and Asp370. Residue Cys396 is the Nucleophile of the active site.

The protein belongs to the class I-like SAM-binding methyltransferase superfamily. RNA M5U methyltransferase family. RlmD subfamily.

It catalyses the reaction uridine(1939) in 23S rRNA + S-adenosyl-L-methionine = 5-methyluridine(1939) in 23S rRNA + S-adenosyl-L-homocysteine + H(+). Functionally, catalyzes the formation of 5-methyl-uridine at position 1939 (m5U1939) in 23S rRNA. In Aliivibrio fischeri (strain MJ11) (Vibrio fischeri), this protein is 23S rRNA (uracil(1939)-C(5))-methyltransferase RlmD.